The following is a 36-amino-acid chain: Putative DNA-binding protein inhibitor ID-2B (36 aa).

This chain is Putative DNA-binding protein inhibitor ID-2B (ID2B), found in Homo sapiens (Human).